We begin with the raw amino-acid sequence, 423 residues long: Exodeoxyribonuclease 7 large subunit (423 aa).

It belongs to the XseA family. Heterooligomer composed of large and small subunits.

The protein resides in the cytoplasm. It catalyses the reaction Exonucleolytic cleavage in either 5'- to 3'- or 3'- to 5'-direction to yield nucleoside 5'-phosphates.. In terms of biological role, bidirectionally degrades single-stranded DNA into large acid-insoluble oligonucleotides, which are then degraded further into small acid-soluble oligonucleotides. The sequence is that of Exodeoxyribonuclease 7 large subunit from Natranaerobius thermophilus (strain ATCC BAA-1301 / DSM 18059 / JW/NM-WN-LF).